Reading from the N-terminus, the 495-residue chain is Glutamate--tRNA ligase 1 (495 aa).

The 'HIGH' region motif lies at 10–20; that stretch reads PSPTGALHMGG. The 'KMSKS' region signature appears at 251 to 255; that stretch reads KLSKR. ATP is bound at residue K254.

The protein belongs to the class-I aminoacyl-tRNA synthetase family. Glutamate--tRNA ligase type 1 subfamily. In terms of assembly, monomer.

It localises to the cytoplasm. The catalysed reaction is tRNA(Glu) + L-glutamate + ATP = L-glutamyl-tRNA(Glu) + AMP + diphosphate. Its function is as follows. Catalyzes the attachment of glutamate to tRNA(Glu) in a two-step reaction: glutamate is first activated by ATP to form Glu-AMP and then transferred to the acceptor end of tRNA(Glu). This Syntrophomonas wolfei subsp. wolfei (strain DSM 2245B / Goettingen) protein is Glutamate--tRNA ligase 1.